A 136-amino-acid chain; its full sequence is Cyclase aurE (136 aa).

The protein belongs to the aurE cyclase family.

It functions in the pathway polyketide biosynthesis. In terms of biological role, cyclase; part of the gene cluster that mediates the biosynthesis of aurovertins, fungal polyketides that exhibit potent inhibition of adenosine triphosphate synthase. Tha biosynthesis starts with the HR-PKS aurA that selects propionate as the starter unit; synthesizes a hexa-ene chain through the repeated functions of the KR and DH domains in the first six iterations; selectively introduces three alpha-methyl substitutions at C4, C6, and C16 using the S-adensylmethionine-dependent cMET; and shuts off KR and DH in the last three iterations to afford a 1,3,5-triketo portion that can undergo intramolecular cyclization to yield the alpha-pyrone intermediate. AurE may act as a cyclase and enhances the rate of pyrone formation and product release of aurA. The methyltransferase aurB then methylates the C17 hydroxyl group. C17 methylation is required to initiate epoxidation by the downstream monooxygenase aurC. The monooxygenase aurC and the epoxide hydrolase aurD can iteratively transform the terminal triene portion of the methylated precursor into the dioxabicyclo[3.2.1]octane scaffold of aurovertin E. Epoxidation modifications of the precursor occur in two separate steps; bis-epoxidation of the two terminal olefins takes place first, followed by another epoxidation that occurs at C7-C8 after tetrahydrofuran formation. The O-acyltransferase aurG converts aurovertin E to aurovertin A. In Calcarisporium arbuscula (Dendryphion arbuscula), this protein is Cyclase aurE.